A 314-amino-acid chain; its full sequence is L-lactate dehydrogenase 2 (314 aa).

NAD(+) contacts are provided by residues Val16, Asp37, Lys42, Tyr68, and 82-83 (GL). Substrate contacts are provided by residues Gln85, Arg91, and 123–126 (NPVD). Residues 121-123 (ATN) and Ser146 contribute to the NAD(+) site. 151 to 154 (DSAR) contacts substrate. Residues Arg156 and His171 each coordinate beta-D-fructose 1,6-bisphosphate. His178 acts as the Proton acceptor in catalysis. Tyr223 bears the Phosphotyrosine mark. Thr232 contributes to the substrate binding site.

It belongs to the LDH/MDH superfamily. LDH family. As to quaternary structure, homotetramer.

It localises to the cytoplasm. It catalyses the reaction (S)-lactate + NAD(+) = pyruvate + NADH + H(+). The protein operates within fermentation; pyruvate fermentation to lactate; (S)-lactate from pyruvate: step 1/1. With respect to regulation, allosterically activated by fructose 1,6-bisphosphate (FBP). In terms of biological role, catalyzes the conversion of lactate to pyruvate. The chain is L-lactate dehydrogenase 2 from Bacillus anthracis.